The chain runs to 478 residues: MEFEAVIGLEIHIELNCPTKLFCDCPNNPGDEPNVNTCPICLWFPGAIPRLSQAALEKASLLCLGLGAELQPRSAFDQKVYYYPDLPKGYQLSQAHLPLARGGGIDITDENGRPKRLRIHHIHMEEDVAKLVHEIEGRTPISLVDFNRAGAPLVEIVSEPDFRTPHDAMEFLKALRTQVRYVGASECSMENGTMRVDANISVRPRGTDQMNTKVEVKNMNSIRHVGDAVAYEISRQSACVSSGEAVVLHTRLWDPDRKATFPMRAKFEGPCVPDPSVPFIDLSPEWIEKMRARLPEMPAARAERFVARYGLTDEEAVYLSADPETASYFEALIAEKVAPRTAMHWLTTQLLAAVRERGQELSGTPVTPARFAALLKMLAKDEINANAARQVLIELFDCGESPEKIVEARGIRQVSDHDALEGLIDRVLGENPAAVADYRGGQGKAAGFLIGKVMQASGGKANPKIIRELLTKKLDALG.

This sequence belongs to the GatB/GatE family. GatB subfamily. As to quaternary structure, heterotrimer of A, B and C subunits.

The enzyme catalyses L-glutamyl-tRNA(Gln) + L-glutamine + ATP + H2O = L-glutaminyl-tRNA(Gln) + L-glutamate + ADP + phosphate + H(+). It carries out the reaction L-aspartyl-tRNA(Asn) + L-glutamine + ATP + H2O = L-asparaginyl-tRNA(Asn) + L-glutamate + ADP + phosphate + 2 H(+). Functionally, allows the formation of correctly charged Asn-tRNA(Asn) or Gln-tRNA(Gln) through the transamidation of misacylated Asp-tRNA(Asn) or Glu-tRNA(Gln) in organisms which lack either or both of asparaginyl-tRNA or glutaminyl-tRNA synthetases. The reaction takes place in the presence of glutamine and ATP through an activated phospho-Asp-tRNA(Asn) or phospho-Glu-tRNA(Gln). This chain is Aspartyl/glutamyl-tRNA(Asn/Gln) amidotransferase subunit B 1, found in Syntrophus aciditrophicus (strain SB).